The following is a 214-amino-acid chain: Small ribosomal subunit protein uS4c (214 aa).

Composition is skewed to basic residues over residues 1–14 (MSRY…KIKR) and 36–46 (LSRPKPKKKSQ). The disordered stretch occupies residues 1 to 46 (MSRYRGPRVKKIKRLGSLPGLTTKKPPIVVRDPRKLSRPKPKKKSQ). The S4 RNA-binding domain occupies 92–153 (MRLDNTLFRL…KEKSKALIQN (62 aa)).

The protein belongs to the universal ribosomal protein uS4 family. In terms of assembly, part of the 30S ribosomal subunit. Contacts protein S5. The interaction surface between S4 and S5 is involved in control of translational fidelity.

Its subcellular location is the plastid. It localises to the chloroplast. Its function is as follows. One of the primary rRNA binding proteins, it binds directly to 16S rRNA where it nucleates assembly of the body of the 30S subunit. Functionally, with S5 and S12 plays an important role in translational accuracy. The sequence is that of Small ribosomal subunit protein uS4c (rps4) from Pelargonium hortorum (Common geranium).